A 569-amino-acid chain; its full sequence is Methionine--tRNA ligase (569 aa).

A 'HIGH' region motif is present at residues 11–21 (PYINGVKHLGN). Cysteine 143, cysteine 146, cysteine 156, and cysteine 159 together coordinate Zn(2+). The 'KMSKS' region motif lies at 342-346 (KFSTS). Residue threonine 345 coordinates ATP.

It belongs to the class-I aminoacyl-tRNA synthetase family. MetG type 1 subfamily. Monomer. Requires Zn(2+) as cofactor.

The protein localises to the cytoplasm. The enzyme catalyses tRNA(Met) + L-methionine + ATP = L-methionyl-tRNA(Met) + AMP + diphosphate. In terms of biological role, is required not only for elongation of protein synthesis but also for the initiation of all mRNA translation through initiator tRNA(fMet) aminoacylation. The protein is Methionine--tRNA ligase of Caulobacter sp. (strain K31).